Here is a 392-residue protein sequence, read N- to C-terminus: Probable inactive serine/threonine-protein kinase DDB_G0280855 (392 aa).

Residues 46 to 349 enclose the Protein kinase domain; that stretch reads ITKKTIYACD…IERIIQHPYF (304 aa). ATP-binding positions include 52-60 and lysine 75; that span reads YACDINGTM.

It belongs to the protein kinase superfamily. CMGC Ser/Thr protein kinase family. MAP kinase subfamily.

In Dictyostelium discoideum (Social amoeba), this protein is Probable inactive serine/threonine-protein kinase DDB_G0280855.